We begin with the raw amino-acid sequence, 647 residues long: NADP-dependent malic enzyme, chloroplastic (647 aa).

The N-terminal 61 residues, 1–61 (MMSLNSSSVV…VDGAVKDVNA (61 aa)), are a transit peptide targeting the chloroplast. The active-site Proton donor is the Y195. Residue R248 coordinates NAD(+). The active-site Proton acceptor is the K266. Positions 338, 339, and 362 each coordinate a divalent metal cation. Residue D362 participates in NAD(+) binding. Residue 391–407 (LFLGAGEAGTGIAELIA) coordinates NADP(+). N503 is an NAD(+) binding site.

The protein belongs to the malic enzymes family. As to quaternary structure, homotetramer. Mg(2+) serves as cofactor. Mn(2+) is required as a cofactor.

It localises to the plastid. Its subcellular location is the chloroplast. It carries out the reaction (S)-malate + NADP(+) = pyruvate + CO2 + NADPH. The catalysed reaction is oxaloacetate + H(+) = pyruvate + CO2. It functions in the pathway photosynthesis; C3 acid pathway. In terms of biological role, the chloroplastic ME isoform decarboxylates malate shuttled from neighboring mesophyll cells. The CO(2) released is then refixed by ribulose-bisphosphate carboxylase. This pathway eliminates the photorespiratory loss of CO(2) that occurs in most plants. The chain is NADP-dependent malic enzyme, chloroplastic (MODA) from Flaveria pringlei.